A 465-amino-acid chain; its full sequence is UDP-N-acetylmuramate--L-alanine ligase (465 aa).

Residue 115 to 121 (GAHGKTT) coordinates ATP.

This sequence belongs to the MurCDEF family.

The protein resides in the cytoplasm. The enzyme catalyses UDP-N-acetyl-alpha-D-muramate + L-alanine + ATP = UDP-N-acetyl-alpha-D-muramoyl-L-alanine + ADP + phosphate + H(+). It participates in cell wall biogenesis; peptidoglycan biosynthesis. Its function is as follows. Cell wall formation. The sequence is that of UDP-N-acetylmuramate--L-alanine ligase from Coxiella burnetii (strain Dugway 5J108-111).